Here is a 223-residue protein sequence, read N- to C-terminus: Ribosomal RNA small subunit methyltransferase G (223 aa).

S-adenosyl-L-methionine contacts are provided by residues Gly90, Leu95, 141–142 (VE), and Arg156.

It belongs to the methyltransferase superfamily. RNA methyltransferase RsmG family.

It is found in the cytoplasm. The catalysed reaction is guanosine(527) in 16S rRNA + S-adenosyl-L-methionine = N(7)-methylguanosine(527) in 16S rRNA + S-adenosyl-L-homocysteine. In terms of biological role, specifically methylates the N7 position of guanine in position 527 of 16S rRNA. The chain is Ribosomal RNA small subunit methyltransferase G from Ralstonia nicotianae (strain ATCC BAA-1114 / GMI1000) (Ralstonia solanacearum).